Consider the following 359-residue polypeptide: Pyruvate dehydrogenase E1 component subunit beta, mitochondrial (359 aa).

Residues 1 to 30 (MAAVSGLVRRPLREVSRLLKRRFHWTAPAA) constitute a mitochondrion transit peptide. Residue Tyr67 is modified to Phosphotyrosine. Glu89 provides a ligand contact to thiamine diphosphate. K(+) contacts are provided by Ile142, Ala190, Ile191, Asp193, and Asn195. At Lys354 the chain carries N6-acetyllysine.

In terms of assembly, heterotetramer of two PDHA1 and two PDHB subunits. The heterotetramer interacts with DLAT, and is part of the multimeric pyruvate dehydrogenase complex that contains multiple copies of pyruvate dehydrogenase (E1), dihydrolipoamide acetyltransferase (DLAT, E2) and lipoamide dehydrogenase (DLD, E3). These subunits are bound to an inner core composed of about 48 DLAT and 12 PDHX molecules. Interacts with DLAT. Thiamine diphosphate is required as a cofactor.

The protein resides in the mitochondrion matrix. It carries out the reaction N(6)-[(R)-lipoyl]-L-lysyl-[protein] + pyruvate + H(+) = N(6)-[(R)-S(8)-acetyldihydrolipoyl]-L-lysyl-[protein] + CO2. The pyruvate dehydrogenase complex catalyzes the overall conversion of pyruvate to acetyl-CoA and CO(2), and thereby links the glycolytic pathway to the tricarboxylic cycle. This chain is Pyruvate dehydrogenase E1 component subunit beta, mitochondrial (PDHB), found in Pongo abelii (Sumatran orangutan).